We begin with the raw amino-acid sequence, 312 residues long: Ribosomal protein L11 methyltransferase (312 aa).

Residues T163, G184, D206, and N248 each coordinate S-adenosyl-L-methionine.

It belongs to the methyltransferase superfamily. PrmA family.

The protein resides in the cytoplasm. It catalyses the reaction L-lysyl-[protein] + 3 S-adenosyl-L-methionine = N(6),N(6),N(6)-trimethyl-L-lysyl-[protein] + 3 S-adenosyl-L-homocysteine + 3 H(+). In terms of biological role, methylates ribosomal protein L11. This chain is Ribosomal protein L11 methyltransferase, found in Clostridium botulinum (strain Loch Maree / Type A3).